Consider the following 194-residue polypeptide: MSNEENKVNEEAVVEEQVEAVGTEADVEWNESAEDSQEAKIAELEAALLASQAQIKEQQDTVLRAKAEEQNVRRRAEEDVDKARKYALKKFAGELLPVLDNLERALENGDKENEAAKALLEGVELTLQTFVSTVEKFGLTVINPMGEAFNPELHQAIGMQASPDHESNTVMIVMQKGYTLNDQVLRPAMVMVAQ.

The protein belongs to the GrpE family. Homodimer.

The protein resides in the cytoplasm. Its function is as follows. Participates actively in the response to hyperosmotic and heat shock by preventing the aggregation of stress-denatured proteins, in association with DnaK and GrpE. It is the nucleotide exchange factor for DnaK and may function as a thermosensor. Unfolded proteins bind initially to DnaJ; upon interaction with the DnaJ-bound protein, DnaK hydrolyzes its bound ATP, resulting in the formation of a stable complex. GrpE releases ADP from DnaK; ATP binding to DnaK triggers the release of the substrate protein, thus completing the reaction cycle. Several rounds of ATP-dependent interactions between DnaJ, DnaK and GrpE are required for fully efficient folding. In Aliivibrio fischeri (strain MJ11) (Vibrio fischeri), this protein is Protein GrpE.